The sequence spans 259 residues: uncharacterized protein (259 aa).

Residues histidine 9, histidine 11, glutamate 97, histidine 133, histidine 157, and aspartate 207 each contribute to the a divalent metal cation site.

The protein belongs to the metallo-dependent hydrolases superfamily. TatD-type hydrolase family. A divalent metal cation is required as a cofactor.

This is an uncharacterized protein from Escherichia coli (strain K12).